Consider the following 287-residue polypeptide: 4-hydroxybenzoate octaprenyltransferase (287 aa).

8 consecutive transmembrane segments (helical) span residues 19-39 (IGSL…ADGL), 42-62 (WHVL…GCVI), 95-115 (FFAV…TLTI), 136-156 (YLPQ…AYAA), 166-186 (WLLF…YAMV), 210-230 (IIGL…SQLA), 233-253 (GIYY…QWLI), and 264-284 (AFLN…ASVL).

Belongs to the UbiA prenyltransferase family. The cofactor is Mg(2+).

The protein localises to the cell inner membrane. It carries out the reaction all-trans-octaprenyl diphosphate + 4-hydroxybenzoate = 4-hydroxy-3-(all-trans-octaprenyl)benzoate + diphosphate. It participates in cofactor biosynthesis; ubiquinone biosynthesis. In terms of biological role, catalyzes the prenylation of para-hydroxybenzoate (PHB) with an all-trans polyprenyl group. Mediates the second step in the final reaction sequence of ubiquinone-8 (UQ-8) biosynthesis, which is the condensation of the polyisoprenoid side chain with PHB, generating the first membrane-bound Q intermediate 3-octaprenyl-4-hydroxybenzoate. The sequence is that of 4-hydroxybenzoate octaprenyltransferase from Aliivibrio fischeri (strain MJ11) (Vibrio fischeri).